The chain runs to 274 residues: SPbeta prophage-derived UPF0714 protein YoqZ (274 aa).

This sequence belongs to the UPF0714 family.

This chain is SPbeta prophage-derived UPF0714 protein YoqZ (yoqZ), found in Bacillus subtilis (strain 168).